The primary structure comprises 271 residues: MFIDKQTVERHFSKSAHLYDGVNHVQRKMAHRLVQLLDEKRRDAKDEPRAILDIGCGTGWLTRECLKSFPQATIDAVDLSKQMLEVAEKNVSSHPNVQFIQGDIEKMVREKPSAKTYDVIVANAVFQWLDKPTETVAQLRSWLKPNGLLLFSTFGPDTFYELHDSFQLAAKQLGIIDERRGLDYLSKTEWKRTLDGLFAELTIHEEKAIESYATVEQFLHTVKKMGATYSQSSRPLSKRYYQLMKEIYEQRYRTEDSIPATYDCLYVLCQA.

It belongs to the methyltransferase superfamily.

The catalysed reaction is malonyl-[ACP] + S-adenosyl-L-methionine = malonyl-[ACP] methyl ester + S-adenosyl-L-homocysteine. It participates in cofactor biosynthesis; biotin biosynthesis. Converts the free carboxyl group of a malonyl-thioester to its methyl ester by transfer of a methyl group from S-adenosyl-L-methionine (SAM). It allows to synthesize pimeloyl-ACP via the fatty acid synthetic pathway. This chain is Malonyl-[acyl-carrier protein] O-methyltransferase, found in Halalkalibacterium halodurans (strain ATCC BAA-125 / DSM 18197 / FERM 7344 / JCM 9153 / C-125) (Bacillus halodurans).